Consider the following 366-residue polypeptide: Galactoside alpha-(1,2)-fucosyltransferase 1 (366 aa).

Residues 1-8 lie on the Cytoplasmic side of the membrane; the sequence is MWPRSHRH. A helical; Signal-anchor for type II membrane protein membrane pass occupies residues 9-25; that stretch reads LCLAFLLVCVLSAISFL. Topologically, residues 26–366 are lumenal; that stretch reads IHFHQDSIRH…LSPLWPLAEP (341 aa). 3 N-linked (GlcNAc...) asparagine glycosylation sites follow: Asn66, Asn302, and Asn328.

It belongs to the glycosyltransferase 11 family.

The protein localises to the golgi apparatus. Its subcellular location is the golgi stack membrane. The catalysed reaction is a beta-D-galactosyl-(1-&gt;4)-N-acetyl-beta-D-glucosaminyl derivative + GDP-beta-L-fucose = an alpha-L-Fuc-(1-&gt;2)-beta-D-Gal-(1-&gt;4)-beta-D-GlcNAc derivative + GDP + H(+). It catalyses the reaction a ganglioside GA1 + GDP-beta-L-fucose = a ganglioside Fuc-GA1 + GDP + H(+). It carries out the reaction a beta-D-Gal-(1-&gt;3)-beta-D-GlcNAc-(1-&gt;3)-beta-D-Gal-(1-&gt;4)-beta-D-Glc-(1&lt;-&gt;1')-Cer(d18:1(4E)) + GDP-beta-L-fucose = alpha-L-fucosyl-(1-&gt;2)- beta-D-galactosyl-(1-&gt;3)-N-acetyl-beta-D-glucosaminyl-(1-&gt;3)-beta-D-galactosyl-(1-&gt;4)-beta-D-glucosyl-(1&lt;-&gt;1')-N-acylsphing-4-enine + GDP + H(+). The enzyme catalyses a neolactoside nLc4Cer(d18:1(4E)) + GDP-beta-L-fucose = a neolactoside IV(2)-alpha-Fuc-nLc4Cer(d18:1(4E)) + GDP + H(+). The catalysed reaction is a ganglioside GM1 + GDP-beta-L-fucose = a ganglioside Fuc-GM1 + GDP + H(+). It catalyses the reaction beta-D-galactosyl-(1-&gt;3)-N-acetyl-D-galactosamine + GDP-beta-L-fucose = alpha-L-fucosyl-(1-&gt;2)-beta-D-galactosyl-(1-&gt;3)-N-acetyl-D-galactosamine + GDP + H(+). It participates in protein modification; protein glycosylation. Catalyzes the transfer of L-fucose, from a guanosine diphosphate-beta-L-fucose, to the terminal galactose residue of glycoconjugates through an alpha(1,2) linkage leading to H antigen synthesis that is an intermediate substrate in the synthesis of ABO blood group antigens. H antigen is essential for maturation of the glomerular layer of the main olfactory bulb, in cell migration and early cell-cell contacts during tumor associated angiogenesis. Preferentially fucosylates soluble lactose and to a lesser extent fucosylates glycolipids gangliosides GA1 and GM1a. The chain is Galactoside alpha-(1,2)-fucosyltransferase 1 from Saimiri sciureus (Common squirrel monkey).